The sequence spans 419 residues: MEKERETLQVWKQRVGQELDSVIAFWMEHSHDQEHGGFFTCLGRDGQVYDHLKYVWLQGRQVWMYCRLYRTFERFRRVELLDAAKAGGEFLLSYARVAPPGKKCAFVLTQDGRPVKVQRTIFSECFYTMAMNELWKVTGEMHYQREAVEMMDQIIHWVREDPAGLGRPQLSGTLATEPMAVPMMLLNLVEQLGEEDEEMTDKYAELGDWCAHRILQHVQRDGQVVLENVSEDGKELPGCLGRHQNPGHTLEAGWFLLQYALRKGDPKLQRHIIDKFLLLPFHSGWDPEHGGLFYFQDADDLCPTQLEWNMKLWWPHTEAMIAFLMGYRDSGDPALLNLFYQVAEYTFHQFRDPEYGEWFGYLNQEGKVALTIKGGPFKGCFHVPRCLAMCEQILGALLQRLGPAPLGSLPAVPTREGSK.

The interval 185 to 206 (LLNLVEQLGEEDEEMTDKYAEL) is leucine-zipper. A Phosphoserine modification is found at Ser-418.

The protein belongs to the N-acylglucosamine 2-epimerase family. As to quaternary structure, homodimer. Forms a heterodimer with renin and inhibits its activity. Kidney, adrenal gland, brain, lung, spleen, ovary, testis and heart.

The enzyme catalyses an N-acyl-D-glucosamine = an N-acyl-D-mannosamine. Its pathway is amino-sugar metabolism; N-acetylneuraminate degradation. In terms of biological role, catalyzes the interconversion of N-acetylglucosamine to N-acetylmannosamine. Involved in the N-glycolylneuraminic acid (Neu5Gc) degradation pathway. The protein is N-acylglucosamine 2-epimerase (Renbp) of Rattus norvegicus (Rat).